The primary structure comprises 337 residues: Fructose-1,6-bisphosphatase class 1 (337 aa).

Mg(2+) contacts are provided by Glu94, Asp116, Leu118, and Asp119. Residues 119–122, Asn210, and Lys276 contribute to the substrate site; that span reads DGSS. A Mg(2+)-binding site is contributed by Glu282.

This sequence belongs to the FBPase class 1 family. Homotetramer. Mg(2+) is required as a cofactor.

Its subcellular location is the cytoplasm. It carries out the reaction beta-D-fructose 1,6-bisphosphate + H2O = beta-D-fructose 6-phosphate + phosphate. The protein operates within carbohydrate biosynthesis; gluconeogenesis. In Burkholderia cenocepacia (strain HI2424), this protein is Fructose-1,6-bisphosphatase class 1.